Reading from the N-terminus, the 494-residue chain is Cytochrome P450 2G1 (494 aa).

Cysteine 439 provides a ligand contact to heme.

Belongs to the cytochrome P450 family. Requires heme as cofactor. Olfactory epithelium.

The protein localises to the endoplasmic reticulum membrane. It localises to the microsome membrane. The catalysed reaction is an organic molecule + reduced [NADPH--hemoprotein reductase] + O2 = an alcohol + oxidized [NADPH--hemoprotein reductase] + H2O + H(+). Cytochromes P450 are a group of heme-thiolate monooxygenases. This isozyme seems to be implicated in olfaction. This is Cytochrome P450 2G1 (CYP2G1) from Oryctolagus cuniculus (Rabbit).